A 93-amino-acid polypeptide reads, in one-letter code: SH3 domain-binding glutamic acid-rich-like protein 3 (93 aa).

Ser-2 is modified (N-acetylserine). Residues Ser-2–Ala-93 form the Glutaredoxin domain. O-linked (GalNAc...) threonine glycosylation occurs at Thr-9.

It belongs to the SH3BGR family. As to quaternary structure, homodimer. Interacts with MYO1C (via its IQ motifs); the interaction is dependent on calcium and takes place at membrane ruffles. May be glycosylated.

The protein localises to the cytoplasm. Its subcellular location is the cytosol. It localises to the cell projection. The protein resides in the ruffle membrane. It is found in the nucleus. Functionally, could act as a modulator of glutaredoxin biological activity. May play a role in cytoskeleton organization. The protein is SH3 domain-binding glutamic acid-rich-like protein 3 (Sh3bgrl3) of Mus musculus (Mouse).